Here is a 425-residue protein sequence, read N- to C-terminus: Transmembrane protein 184A (425 aa).

Transmembrane regions (helical) follow at residues 51–71 (LFLT…TALL), 96–116 (LLFI…LLGG), 133–153 (FVIY…SAIM), 189–209 (TLQF…LQAF), 226–246 (VTLV…LFYF), 261–281 (FLTI…LAIL), and 303–323 (LAAG…SLAL). The tract at residues 375–425 (QYTQQSTHEAPGPGQGGHPAPSTHPGPASGSGGGKKSRNIEKRMLIPSEDL) is disordered. Over residues 392–402 (HPAPSTHPGPA) the composition is skewed to low complexity.

Belongs to the TMEM184 family. As to expression, expressed in testis, pancreas, parotid salivary gland and mammary gland (at protein level).

The protein resides in the cell membrane. It localises to the cytoplasm. It is found in the perinuclear region. Its subcellular location is the cytoplasmic vesicle membrane. The protein localises to the early endosome membrane. The protein resides in the endosome. It localises to the cytoplasmic vesicle. It is found in the secretory vesicle membrane. In terms of biological role, acts as a heparin receptor in vascular cells. May be involved in vesicle transport in exocrine cells and Sertoli cells. This Mus musculus (Mouse) protein is Transmembrane protein 184A (Tmem184a).